Here is a 210-residue protein sequence, read N- to C-terminus: Large ribosomal subunit protein uL4 (210 aa).

The protein belongs to the universal ribosomal protein uL4 family. In terms of assembly, part of the 50S ribosomal subunit.

Functionally, one of the primary rRNA binding proteins, this protein initially binds near the 5'-end of the 23S rRNA. It is important during the early stages of 50S assembly. It makes multiple contacts with different domains of the 23S rRNA in the assembled 50S subunit and ribosome. Its function is as follows. Forms part of the polypeptide exit tunnel. This Thermus thermophilus protein is Large ribosomal subunit protein uL4 (rplD).